A 411-amino-acid chain; its full sequence is Tyrosine--tRNA ligase (411 aa).

Position 34 (Y34) interacts with L-tyrosine. The 'HIGH' region motif lies at C39–S48. Positions 171 and 175 each coordinate L-tyrosine. The 'KMSKS' region signature appears at K231 to T235. K234 serves as a coordination point for ATP. Residues I345 to V411 enclose the S4 RNA-binding domain.

It belongs to the class-I aminoacyl-tRNA synthetase family. TyrS type 1 subfamily. Homodimer.

It is found in the cytoplasm. The enzyme catalyses tRNA(Tyr) + L-tyrosine + ATP = L-tyrosyl-tRNA(Tyr) + AMP + diphosphate + H(+). Functionally, catalyzes the attachment of tyrosine to tRNA(Tyr) in a two-step reaction: tyrosine is first activated by ATP to form Tyr-AMP and then transferred to the acceptor end of tRNA(Tyr). The sequence is that of Tyrosine--tRNA ligase from Rickettsia felis (strain ATCC VR-1525 / URRWXCal2) (Rickettsia azadi).